The chain runs to 514 residues: Bifunctional purine biosynthesis protein PurH (514 aa).

The MGS-like domain maps to 1-143; it reads MTRRALISVS…KNHAGVLVLV (143 aa).

It belongs to the PurH family.

The catalysed reaction is (6R)-10-formyltetrahydrofolate + 5-amino-1-(5-phospho-beta-D-ribosyl)imidazole-4-carboxamide = 5-formamido-1-(5-phospho-D-ribosyl)imidazole-4-carboxamide + (6S)-5,6,7,8-tetrahydrofolate. The enzyme catalyses IMP + H2O = 5-formamido-1-(5-phospho-D-ribosyl)imidazole-4-carboxamide. The protein operates within purine metabolism; IMP biosynthesis via de novo pathway; 5-formamido-1-(5-phospho-D-ribosyl)imidazole-4-carboxamide from 5-amino-1-(5-phospho-D-ribosyl)imidazole-4-carboxamide (10-formyl THF route): step 1/1. It participates in purine metabolism; IMP biosynthesis via de novo pathway; IMP from 5-formamido-1-(5-phospho-D-ribosyl)imidazole-4-carboxamide: step 1/1. The sequence is that of Bifunctional purine biosynthesis protein PurH from Deinococcus geothermalis (strain DSM 11300 / CIP 105573 / AG-3a).